A 306-amino-acid chain; its full sequence is Cilia- and flagella-associated protein 73 (306 aa).

Coiled-coil stretches lie at residues 49 to 139 (LQAQ…QRLE) and 197 to 231 (QSEKQDEMLNLNQQRTQLVEQLEAAREHRQQWESK).

Belongs to the CFAP73 family.

Its subcellular location is the cytoplasm. The protein localises to the cytoskeleton. The protein resides in the cilium axoneme. Its function is as follows. May play a role in ciliary/flagellar motility by regulating the assembly and the activity of axonemal inner dynein arm. The sequence is that of Cilia- and flagella-associated protein 73 from Mus musculus (Mouse).